We begin with the raw amino-acid sequence, 119 residues long: NADH-quinone oxidoreductase subunit A (119 aa).

Transmembrane regions (helical) follow at residues 7–27, 63–83, and 88–108; these read FPVL…VSIG, LVAI…PWGV, and IGWP…LGFA.

The protein belongs to the complex I subunit 3 family. In terms of assembly, NDH-1 is composed of 14 different subunits. Subunits NuoA, H, J, K, L, M, N constitute the membrane sector of the complex.

The protein localises to the cell inner membrane. The enzyme catalyses a quinone + NADH + 5 H(+)(in) = a quinol + NAD(+) + 4 H(+)(out). NDH-1 shuttles electrons from NADH, via FMN and iron-sulfur (Fe-S) centers, to quinones in the respiratory chain. The immediate electron acceptor for the enzyme in this species is believed to be ubiquinone. Couples the redox reaction to proton translocation (for every two electrons transferred, four hydrogen ions are translocated across the cytoplasmic membrane), and thus conserves the redox energy in a proton gradient. The protein is NADH-quinone oxidoreductase subunit A of Paraburkholderia phytofirmans (strain DSM 17436 / LMG 22146 / PsJN) (Burkholderia phytofirmans).